Here is a 283-residue protein sequence, read N- to C-terminus: NADH-ubiquinone oxidoreductase 30.4 kDa subunit, mitochondrial (283 aa).

A mitochondrion-targeting transit peptide spans 1 to 17 (MASKLCRSRALASALRS). The interval 258 to 283 (GAGIDRKPESFKLPTPKPETKPEEKK) is disordered.

Belongs to the complex I 30 kDa subunit family. As to quaternary structure, complex I is composed of about 40 different subunits. This is a component of the iron-sulfur protein fraction.

It localises to the mitochondrion inner membrane. The enzyme catalyses a ubiquinone + NADH + 5 H(+)(in) = a ubiquinol + NAD(+) + 4 H(+)(out). Core subunit of the mitochondrial membrane respiratory chain NADH dehydrogenase (Complex I) that is believed to belong to the minimal assembly required for catalysis. Complex I functions in the transfer of electrons from NADH to the respiratory chain. The immediate electron acceptor for the enzyme is believed to be ubiquinone. In Neurospora crassa (strain ATCC 24698 / 74-OR23-1A / CBS 708.71 / DSM 1257 / FGSC 987), this protein is NADH-ubiquinone oxidoreductase 30.4 kDa subunit, mitochondrial (nuo-31).